Reading from the N-terminus, the 225-residue chain is Membrane protein (225 aa).

The Virion surface portion of the chain corresponds to 1 to 20 (MSNETNCTLDFEQSVELFKE). A helical transmembrane segment spans residues 21-41 (YNLFITAFLLFLTIILQYGYA). Residues 42–51 (TRIRFIYILK) lie on the Intravirion side of the membrane. A helical membrane pass occupies residues 52–72 (MIVLWCFWPLNIAVGVISCIY). Residues 73–77 (PPNTG) are Virion surface-facing. A helical membrane pass occupies residues 78–98 (GLVAAIILTVFACLSFVGYWI). At 99-225 (QSCRLFKRCR…VATGGSSLYT (127 aa)) the chain is on the intravirion side.

Belongs to the gammacoronaviruses M protein family. Homomultimer. Interacts with envelope E protein in the budding compartment of the host cell, which is located between endoplasmic reticulum and the Golgi complex. Forms a complex with HE and S proteins. Interacts with nucleocapsid N protein. This interaction probably participates in RNA packaging into the virus.

The protein resides in the virion membrane. It localises to the host Golgi apparatus membrane. Its function is as follows. Component of the viral envelope that plays a central role in virus morphogenesis and assembly via its interactions with other viral proteins. This Avian infectious bronchitis virus (strain KB8523) (IBV) protein is Membrane protein.